The primary structure comprises 64 residues: Large ribosomal subunit protein bL33m (64 aa).

It belongs to the bacterial ribosomal protein bL33 family. In terms of assembly, component of the mitochondrial ribosome large subunit (39S) which comprises a 16S rRNA and about 50 distinct proteins.

It is found in the mitochondrion. The protein is Large ribosomal subunit protein bL33m (mRpL33) of Drosophila melanogaster (Fruit fly).